The sequence spans 384 residues: Glucans biosynthesis protein C (384 aa).

Helical transmembrane passes span Ala17–Trp37, Phe54–Leu74, Val91–Gln111, Leu140–Phe160, Ala173–Ile193, Phe212–Ile232, Phe240–Leu260, Thr274–Gly294, Ala311–Thr331, and Leu338–Ile358.

This sequence belongs to the acyltransferase 3 family. OpgC subfamily.

Its subcellular location is the cell membrane. It functions in the pathway glycan metabolism; osmoregulated periplasmic glucan (OPG) biosynthesis. In terms of biological role, necessary for the succinyl substitution of periplasmic glucans. Could catalyze the transfer of succinyl residues from the cytoplasmic side of the membrane to the nascent glucan backbones on the periplasmic side of the membrane. This chain is Glucans biosynthesis protein C, found in Salmonella heidelberg (strain SL476).